The primary structure comprises 208 residues: Small ribosomal subunit protein uS4 (208 aa).

Residues 98–159 (RRLDNVAYRL…KSRKVAAISE (62 aa)) form the S4 RNA-binding domain.

This sequence belongs to the universal ribosomal protein uS4 family. Part of the 30S ribosomal subunit. Contacts protein S5. The interaction surface between S4 and S5 is involved in control of translational fidelity.

In terms of biological role, one of the primary rRNA binding proteins, it binds directly to 16S rRNA where it nucleates assembly of the body of the 30S subunit. With S5 and S12 plays an important role in translational accuracy. The sequence is that of Small ribosomal subunit protein uS4 from Geobacter sp. (strain M21).